Here is a 169-residue protein sequence, read N- to C-terminus: Endoribonuclease YbeY (169 aa).

The Zn(2+) site is built by His126, His130, and His136.

This sequence belongs to the endoribonuclease YbeY family. The cofactor is Zn(2+).

The protein localises to the cytoplasm. Its function is as follows. Single strand-specific metallo-endoribonuclease involved in late-stage 70S ribosome quality control and in maturation of the 3' terminus of the 16S rRNA. The chain is Endoribonuclease YbeY from Bradyrhizobium sp. (strain BTAi1 / ATCC BAA-1182).